Here is a 71-residue protein sequence, read N- to C-terminus: ATP synthase F(0) complex subunit e, mitochondrial (71 aa).

K34 is subject to N6-acetyllysine. At S68 the chain carries Phosphoserine.

Belongs to the ATPase e subunit family. In terms of assembly, component of the ATP synthase complex composed at least of ATP5F1A/subunit alpha, ATP5F1B/subunit beta, ATP5MC1/subunit c (homooctomer), MT-ATP6/subunit a, MT-ATP8/subunit 8, ATP5ME/subunit e, ATP5MF/subunit f, ATP5MG/subunit g, ATP5MK/subunit k, ATP5MJ/subunit j, ATP5F1C/subunit gamma, ATP5F1D/subunit delta, ATP5F1E/subunit epsilon, ATP5PF/subunit F6, ATP5PB/subunit b, ATP5PD/subunit d, ATP5PO/subunit OSCP. ATP synthase complex consists of a soluble F(1) head domain (subunits alpha(3) and beta(3)) - the catalytic core - and a membrane F(0) domain - the membrane proton channel (subunits c, a, 8, e, f, g, k and j). These two domains are linked by a central stalk (subunits gamma, delta, and epsilon) rotating inside the F1 region and a stationary peripheral stalk (subunits F6, b, d, and OSCP).

It localises to the mitochondrion. The protein resides in the mitochondrion inner membrane. Functionally, subunit e, of the mitochondrial membrane ATP synthase complex (F(1)F(0) ATP synthase or Complex V) that produces ATP from ADP in the presence of a proton gradient across the membrane which is generated by electron transport complexes of the respiratory chain. ATP synthase complex consist of a soluble F(1) head domain - the catalytic core - and a membrane F(1) domain - the membrane proton channel. These two domains are linked by a central stalk rotating inside the F(1) region and a stationary peripheral stalk. During catalysis, ATP synthesis in the catalytic domain of F(1) is coupled via a rotary mechanism of the central stalk subunits to proton translocation. In vivo, can only synthesize ATP although its ATP hydrolase activity can be activated artificially in vitro. Part of the complex F(0) domain. The chain is ATP synthase F(0) complex subunit e, mitochondrial from Pongo abelii (Sumatran orangutan).